A 402-amino-acid polypeptide reads, in one-letter code: Sulfate adenylyltransferase (402 aa).

This sequence belongs to the sulfate adenylyltransferase family.

The catalysed reaction is sulfate + ATP + H(+) = adenosine 5'-phosphosulfate + diphosphate. It participates in sulfur metabolism; hydrogen sulfide biosynthesis; sulfite from sulfate: step 1/3. This Thiobacillus denitrificans (strain ATCC 25259 / T1) protein is Sulfate adenylyltransferase.